A 968-amino-acid polypeptide reads, in one-letter code: MASISDDGMALSGYLKKLKTMKKKFFVLYEETSTSAARLEYYDTEKKFLQRAEPKRVIYLKNCFNINRRLDTKHRFVIVLSSRDGGFGIVLENENDLRKWLDKLLVLQRNIANSNGTAHSPYDHVWQVVIQKKGISEKVGITGTYHCCLTSKSLTFVCIGPEKTPNGEDRVASIEILLTTIRRCGHASPQCIFYVELGRQSVLGSGDLWMETDNAAIATNMHNTILSAMSAKTESNTNLINVYQNRPDLSHEPMRKRSSSANEASKPINVNVIQNSQNSLELRSCSSPHNYGFGRERCDSLPTRNGTLSESSNQTYFGSNHGLRSNTISGIRPHSTNKHSNSPTFTMPLRCSESEESSISVDESDDNGSFSHYRLNTRSSETAIPEENIDDFASAELFSKVTEQNVSDENYIPMNPVNPTDAIHEKEKADMQRLEDASLHFNFPEHASEKLAKDFDLDSDNQCCRPIRAYSIGNKVEHLKFNKRLGHLNDTGQNPNRVRAYSVGSKSKIPRCDLQRVVLVEDNKHEFTANRSQSSITKEGTSYGSSANRQKKSTSAPLLSLKNQINSDRMSDLMEIDFSQATNLEKQKFIKNNEIPKYIENVFPKAPRTDSSSLTLHATSQKDIFNGTKLNNTAITSEDGYLEMKPVGNGYTPSSNCLPMKVEKLKLSDYQTAPPLTATAAPVHDLNKISTYNISAEKWREQPSRSEEKKSNSPLNDNTFSSKPTNVESTSKSHDVHSANQIDCEKVCAQSSDKLNNHLADKIVENNNLDIGGHEEKKLVHSISSEDYTQIKDKSNDFTKFNEAGYKILQIKSDSSLISSKLYQKGIHKDNLERSQRLTESVNTIPDNATATAVSSSSLTKFNINSAKPAAAADSRSTGTDPSTPQNILQIKDLNFPSRSSSRISQPELHYASLDLPHCSGQNPAKYLKRGSRESPPVSACPEDGNTYAKIDFDQSDSSSSSSNIFNT.

Residues Gly8–Arg109 form the PH domain. Residues Tyr122–Asn236 form the IRS-type PTB domain. Residues Asp248–Asn269 form a disordered region. Ser286 and Ser287 each carry phosphoserine. The segment covering Arg304–Ser329 has biased composition (polar residues). The disordered stretch occupies residues Arg304 to Phe370. Ser342 is modified (phosphoserine). Position 411 is a phosphotyrosine; by INSR (Tyr411). A YXXM motif 1 motif is present at residues Tyr411–Met414. The tract at residues Thr528 to Ser555 is disordered. The span at Ala529–Ser555 shows a compositional bias: polar residues. Residue Ser555 is modified to Phosphoserine. The YXXM motif 2 motif lies at Tyr641–Met644. Positions Glu697–Ser711 are enriched in basic and acidic residues. A disordered region spans residues Glu697 to Ala739. A compositionally biased stretch (polar residues) spans Asn712–Thr730. Tyr911 carries the post-translational modification Phosphotyrosine; by INSR. A disordered region spans residues Gln922–Thr968. Ser932 and Ser935 each carry phosphoserine. Tyr948 carries the post-translational modification Phosphotyrosine; by INSR. Positions Ser956–Thr968 are enriched in low complexity.

As to quaternary structure, bindings to phosphatidylinositol 3-kinase and SHP2.

Activates phosphatidylinositol 3-kinase when bound to the regulatory p85 subunit. May mediate the control of various cellular processes by insulin-like peptides. When phosphorylated by the insulin receptor binds specifically to various cellular proteins containing SH2 domains. Involved in control of cell proliferation, cell size, and body and organ growth throughout development. Also has a role in a signaling pathway controlling the physiological response required to endure periods of low nutrient conditions. Insulin/insulin-like growth factor (IGF) signaling pathway has a role in regulating aging and is necessary in the ovary for vitellogenic maturation. The sequence is that of Insulin receptor substrate 1 (chico) from Drosophila melanogaster (Fruit fly).